A 74-amino-acid polypeptide reads, in one-letter code: Exodeoxyribonuclease 7 small subunit (74 aa).

The protein belongs to the XseB family. Heterooligomer composed of large and small subunits.

It is found in the cytoplasm. It carries out the reaction Exonucleolytic cleavage in either 5'- to 3'- or 3'- to 5'-direction to yield nucleoside 5'-phosphates.. In terms of biological role, bidirectionally degrades single-stranded DNA into large acid-insoluble oligonucleotides, which are then degraded further into small acid-soluble oligonucleotides. The sequence is that of Exodeoxyribonuclease 7 small subunit from Haemophilus ducreyi (strain 35000HP / ATCC 700724).